A 142-amino-acid polypeptide reads, in one-letter code: Hemoglobin subunit alpha-3 (142 aa).

The 141-residue stretch at 2–142 (VLSAADKSNV…VSTVLTSKYR (141 aa)) folds into the Globin domain. Residue His59 participates in O2 binding. His88 is a heme b binding site.

Belongs to the globin family. Heterotetramer of two alpha chains and two beta chains. As to expression, red blood cells.

In terms of biological role, involved in oxygen transport from the lung to the various peripheral tissues. The chain is Hemoglobin subunit alpha-3 from Bubalus bubalis (Domestic water buffalo).